A 374-amino-acid polypeptide reads, in one-letter code: MSSDTLSNIFPGETTDIFESTLSDGQKFSEKKSFTKRSFCEFKDCQVEDNCEIDCSPDKKHRSSTDDSCTVRTKPDGTKIWYKNDKIHRDDDKPAIITSDGKTIWYVNGVIHRDNDLPAMVYSNGKKVWYQHNLVHRDHDKPALIDADGTKMWFRYGKYHRDNDLPAIEAGNGDLVWYKNGLLHRDGDKPSVKRANGKTIWCKNGLKHRDNDKPAYIDNNVIRWLQFGKMHRDNDKPAYVSNTGTLKWYVDDKLHRDNDLPAIINLGRSYFWYKDGLLHRDNDLPTVIDFHGEYQWHSYGKLHRDNDNPAIIRSSGICVWYLHGSFYRPDKKPPKIVDLEYYEICSVIIDRKHSHLYNYAKNLLNEHHKIYLTK.

The protein belongs to the mimivirus L41 family.

This is an uncharacterized protein from Acanthamoeba polyphaga (Amoeba).